Here is a 242-residue protein sequence, read N- to C-terminus: DNA repair protein RecO (242 aa).

The protein belongs to the RecO family.

Involved in DNA repair and RecF pathway recombination. In Dechloromonas aromatica (strain RCB), this protein is DNA repair protein RecO.